We begin with the raw amino-acid sequence, 1070 residues long: DNA-directed RNA polymerase subunit beta (1070 aa).

Belongs to the RNA polymerase beta chain family. In terms of assembly, in plastids the minimal PEP RNA polymerase catalytic core is composed of four subunits: alpha, beta, beta', and beta''. When a (nuclear-encoded) sigma factor is associated with the core the holoenzyme is formed, which can initiate transcription.

It localises to the plastid. The protein localises to the chloroplast. It carries out the reaction RNA(n) + a ribonucleoside 5'-triphosphate = RNA(n+1) + diphosphate. Functionally, DNA-dependent RNA polymerase catalyzes the transcription of DNA into RNA using the four ribonucleoside triphosphates as substrates. The polypeptide is DNA-directed RNA polymerase subunit beta (Gossypium hirsutum (Upland cotton)).